The following is a 282-amino-acid chain: 4-hydroxy-3-methylbut-2-enyl diphosphate reductase (282 aa).

A [4Fe-4S] cluster-binding site is contributed by cysteine 14. (2E)-4-hydroxy-3-methylbut-2-enyl diphosphate is bound by residues histidine 43 and histidine 78. Residues histidine 43 and histidine 78 each coordinate dimethylallyl diphosphate. Isopentenyl diphosphate contacts are provided by histidine 43 and histidine 78. Cysteine 100 serves as a coordination point for [4Fe-4S] cluster. Histidine 128 contacts (2E)-4-hydroxy-3-methylbut-2-enyl diphosphate. Histidine 128 provides a ligand contact to dimethylallyl diphosphate. Residue histidine 128 participates in isopentenyl diphosphate binding. Catalysis depends on glutamate 130, which acts as the Proton donor. Threonine 164 is a (2E)-4-hydroxy-3-methylbut-2-enyl diphosphate binding site. A [4Fe-4S] cluster-binding site is contributed by cysteine 192. Residues serine 220, serine 221, asparagine 222, and serine 266 each coordinate (2E)-4-hydroxy-3-methylbut-2-enyl diphosphate. Residues serine 220, serine 221, asparagine 222, and serine 266 each contribute to the dimethylallyl diphosphate site. Isopentenyl diphosphate is bound by residues serine 220, serine 221, asparagine 222, and serine 266.

The protein belongs to the IspH family. The cofactor is [4Fe-4S] cluster.

It catalyses the reaction isopentenyl diphosphate + 2 oxidized [2Fe-2S]-[ferredoxin] + H2O = (2E)-4-hydroxy-3-methylbut-2-enyl diphosphate + 2 reduced [2Fe-2S]-[ferredoxin] + 2 H(+). It carries out the reaction dimethylallyl diphosphate + 2 oxidized [2Fe-2S]-[ferredoxin] + H2O = (2E)-4-hydroxy-3-methylbut-2-enyl diphosphate + 2 reduced [2Fe-2S]-[ferredoxin] + 2 H(+). Its pathway is isoprenoid biosynthesis; dimethylallyl diphosphate biosynthesis; dimethylallyl diphosphate from (2E)-4-hydroxy-3-methylbutenyl diphosphate: step 1/1. It participates in isoprenoid biosynthesis; isopentenyl diphosphate biosynthesis via DXP pathway; isopentenyl diphosphate from 1-deoxy-D-xylulose 5-phosphate: step 6/6. In terms of biological role, catalyzes the conversion of 1-hydroxy-2-methyl-2-(E)-butenyl 4-diphosphate (HMBPP) into a mixture of isopentenyl diphosphate (IPP) and dimethylallyl diphosphate (DMAPP). Acts in the terminal step of the DOXP/MEP pathway for isoprenoid precursor biosynthesis. In Clostridium perfringens (strain 13 / Type A), this protein is 4-hydroxy-3-methylbut-2-enyl diphosphate reductase.